Consider the following 194-residue polypeptide: ATP-dependent Clp protease proteolytic subunit 4 (194 aa).

Ser100 functions as the Nucleophile in the catalytic mechanism. Residue His125 is part of the active site.

This sequence belongs to the peptidase S14 family. Fourteen ClpP subunits assemble into 2 heptameric rings which stack back to back to give a disk-like structure with a central cavity, resembling the structure of eukaryotic proteasomes.

The protein localises to the cytoplasm. It carries out the reaction Hydrolysis of proteins to small peptides in the presence of ATP and magnesium. alpha-casein is the usual test substrate. In the absence of ATP, only oligopeptides shorter than five residues are hydrolyzed (such as succinyl-Leu-Tyr-|-NHMec, and Leu-Tyr-Leu-|-Tyr-Trp, in which cleavage of the -Tyr-|-Leu- and -Tyr-|-Trp bonds also occurs).. Cleaves peptides in various proteins in a process that requires ATP hydrolysis. Has a chymotrypsin-like activity. Plays a major role in the degradation of misfolded proteins. This Rhodococcus jostii (strain RHA1) protein is ATP-dependent Clp protease proteolytic subunit 4.